A 209-amino-acid chain; its full sequence is Kynurenine formamidase (209 aa).

Phe-18 is a substrate binding site. Residues His-48, His-52, and Asp-54 each contribute to the Zn(2+) site. His-58 (proton donor/acceptor) is an active-site residue. His-160 and Glu-172 together coordinate Zn(2+).

Belongs to the Cyclase 1 superfamily. KynB family. In terms of assembly, homodimer. It depends on Zn(2+) as a cofactor.

It catalyses the reaction N-formyl-L-kynurenine + H2O = L-kynurenine + formate + H(+). It functions in the pathway amino-acid degradation; L-tryptophan degradation via kynurenine pathway; L-kynurenine from L-tryptophan: step 2/2. Functionally, catalyzes the hydrolysis of N-formyl-L-kynurenine to L-kynurenine, the second step in the kynurenine pathway of tryptophan degradation. This Bordetella bronchiseptica (strain ATCC BAA-588 / NCTC 13252 / RB50) (Alcaligenes bronchisepticus) protein is Kynurenine formamidase.